Consider the following 386-residue polypeptide: MTGSISTSWLLSSPSNSNSASSSESYSFIATLKPVRYYPFQSLTPNRISSRSPLPSIQIRAGIRELRERIDSVKNTQKITEAMRLVAAARVRRAQDAVIKGRPFTETLVEILYSINQSAQLEDIDFPLSIVRPVKRVALVVVTGDKGLCGGFNNAVTKKATLRVQELKQRGIDCVVISVGKKGNAYFSRRDEFDVDKCIEGGGVFPTTKEAQVIADDVFSLFVSEEVDKVELVYTKFVSLVKSDPVIHTLLPLSMKGESCDVKGECVDAIEDEMFRLTSKDGKLAVERTKLEVEKPEISPLMQFEQDPVQILDAMMPLYLNSQILRALQESLASELASRMNAMSNATDNAVELKKNLTMAYNRARQAKITGELLEIVAGAEALRES.

The interval 1–22 (MTGSISTSWLLSSPSNSNSASS) is disordered. The transit peptide at 1–60 (MTGSISTSWLLSSPSNSNSASSSESYSFIATLKPVRYYPFQSLTPNRISSRSPLPSIQIR) directs the protein to the chloroplast. Cys-149 is a catalytic residue. Cys-260 and Cys-266 form a disulfide bridge.

It belongs to the ATPase gamma chain family. As to quaternary structure, F-type ATPases have 2 components, CF(1) - the catalytic core - and CF(0) - the membrane proton channel. CF(1) has five subunits: alpha(3), beta(3), gamma(1), delta(1), epsilon(1). CF(0) has four main subunits: a, b, b' and c.

Its subcellular location is the plastid. It is found in the chloroplast thylakoid membrane. Its function is as follows. Produces ATP from ADP in the presence of a proton gradient across the membrane. The gamma chain is believed to be important in regulating ATPase activity and the flow of protons through the CF(0) complex. In Arabidopsis thaliana (Mouse-ear cress), this protein is ATP synthase gamma chain 2, chloroplastic (ATPC2).